The chain runs to 478 residues: Calcium/calmodulin-dependent protein kinase type II subunit alpha (478 aa).

At Tyr13 the chain carries Phosphotyrosine. The 259-residue stretch at 13-271 (YQLFEELGKG…AAEALKHPWI (259 aa)) folds into the Protein kinase domain. Residues 19–27 (LGKGAFSVV) and Lys42 each bind ATP. The active-site Proton acceptor is the Asp135. A Phosphoserine modification is found at Ser257. Thr286 carries the post-translational modification Phosphothreonine; by autocatalysis. Positions 290-300 (LKKFNARRKLK) are calmodulin-binding. The segment at 310–320 (TRNFSGGKSGG) is interaction with BAALC. Residues 314-341 (SGGKSGGNKKSDGVKESSESTNTTIEDE) form a disordered region. Residues 322–331 (KKSDGVKESS) show a composition bias toward basic and acidic residues. Phosphoserine occurs at positions 330, 331, and 333. Thr336 and Thr337 each carry phosphothreonine. Ser404 is modified (phosphoserine).

This sequence belongs to the protein kinase superfamily. CAMK Ser/Thr protein kinase family. CaMK subfamily. There are 4 genes encoding calcium/calmodulin-dependent protein kinase type II chains: CAMK2A, CAMK2B, CAMK2G and CAMK2D. The corresponding proteins assemble into homo- or heteromultimeric holoenzymes composed of 12 subunits with two hexameric rings stacked one on top of the other. Interacts with BAALC. Interacts with MPDZ. Interacts with SYN1. Interacts with CAMK2N2. Interacts with SYNGAP1. Interacts with SYNPO2. Interacts with SHANK3. Interacts with GRIN2B. Interacts with CACNB2. Interacts with LRRC7. Interacts with GRM5. Interacts with DAGLA (via C-terminal); this interaction is enhanced by autophosphorylation of CAMK2A at Thr-286. Interacts with CAMK2N1; this interaction requires CAMK2A activation by Ca(2+). Mg(2+) is required as a cofactor. Autophosphorylation of Thr-286 following activation by Ca(2+)/calmodulin. Phosphorylation of Thr-286 locks the kinase into an activated state. Post-translationally, palmitoylated. Probably palmitoylated by ZDHHC3 and ZDHHC7.

It is found in the synapse. It localises to the postsynaptic density. The protein localises to the cell projection. Its subcellular location is the dendritic spine. The protein resides in the dendrite. The enzyme catalyses L-seryl-[protein] + ATP = O-phospho-L-seryl-[protein] + ADP + H(+). The catalysed reaction is L-threonyl-[protein] + ATP = O-phospho-L-threonyl-[protein] + ADP + H(+). Activated by Ca(2+)/calmodulin. Binding of calmodulin results in conformational change that relieves intrasteric autoinhibition and allows autophosphorylation of Thr-286 which turns the kinase in a constitutively active form and confers to the kinase a Ca(2+)-independent activity. In terms of biological role, calcium/calmodulin-dependent protein kinase that functions autonomously after Ca(2+)/calmodulin-binding and autophosphorylation, and is involved in various processes, such as synaptic plasticity, neurotransmitter release and long-term potentiation. Member of the NMDAR signaling complex in excitatory synapses, it regulates NMDAR-dependent potentiation of the AMPAR and therefore excitatory synaptic transmission. Regulates dendritic spine development. Also regulates the migration of developing neurons. Phosphorylates the transcription factor FOXO3 to activate its transcriptional activity. Phosphorylates the transcription factor ETS1 in response to calcium signaling, thereby decreasing ETS1 affinity for DNA. In response to interferon-gamma (IFN-gamma) stimulation, catalyzes phosphorylation of STAT1, stimulating the JAK-STAT signaling pathway. In response to interferon-beta (IFN-beta) stimulation, stimulates the JAK-STAT signaling pathway. Acts as a negative regulator of 2-arachidonoylglycerol (2-AG)-mediated synaptic signaling via modulation of DAGLA activity. In Pongo abelii (Sumatran orangutan), this protein is Calcium/calmodulin-dependent protein kinase type II subunit alpha (CAMK2A).